Here is a 259-residue protein sequence, read N- to C-terminus: Protein TILLER ANGLE CONTROL 1 (259 aa).

Positions 56–62 match the IGT motif motif; it reads GILAIGT. 3 disordered regions span residues 96 to 123, 206 to 226, and 239 to 259; these read EEKA…AKMH, SCME…PLKA, and GKKI…PVTA. Over residues 109–119 the composition is skewed to low complexity; it reads APSEPASALEP.

Belongs to the TAC family. In terms of tissue distribution, expressed in the basal part of seedlings.

Its function is as follows. Involved in the regulation of tiller growth angle. Promotes horizontal shoot growth. TAC1 and LAZY1 play opposite functions in the regulation of tiller growth angle. The protein is Protein TILLER ANGLE CONTROL 1 of Oryza sativa subsp. indica (Rice).